The primary structure comprises 451 residues: uncharacterized protein (451 aa).

Helical transmembrane passes span 13–33 (IGFV…WKFP), 41–61 (GGAF…PLLV), 97–117 (ACFL…LYIV), 142–162 (NPVQ…LVVA), 174–194 (AVMM…SLTL), 217–237 (ILFA…VMVT), 255–275 (IVLM…PAVF), 299–319 (LPFG…AALT), 345–365 (WTSG…YGVL), 381–401 (FTVS…FIPL), and 429–449 (LLRF…IGIL).

The protein belongs to the sodium:neurotransmitter symporter (SNF) (TC 2.A.22) family.

The protein localises to the cell membrane. In terms of biological role, putative sodium-dependent transporter. This is an uncharacterized protein from Bacillus subtilis (strain 168).